The following is a 169-amino-acid chain: Peptide deformylase (169 aa).

The Fe cation site is built by cysteine 91 and histidine 133. The active site involves glutamate 134. Histidine 137 contacts Fe cation.

The protein belongs to the polypeptide deformylase family. Fe(2+) serves as cofactor.

The enzyme catalyses N-terminal N-formyl-L-methionyl-[peptide] + H2O = N-terminal L-methionyl-[peptide] + formate. In terms of biological role, removes the formyl group from the N-terminal Met of newly synthesized proteins. Requires at least a dipeptide for an efficient rate of reaction. N-terminal L-methionine is a prerequisite for activity but the enzyme has broad specificity at other positions. The chain is Peptide deformylase from Salmonella typhi.